A 401-amino-acid polypeptide reads, in one-letter code: O-antigen ligase (401 aa).

Topologically, residues 1-20 (MFAATRLSRLRHDTSRILSH) are cytoplasmic. The helical transmembrane segment at 21-37 (WILPLGWLALLTGMFWV) threads the bilayer. Over 38-42 (GDRSD) the chain is Periplasmic. The helical transmembrane segment at 43-61 (YHRLFYILLAAPTLLYVIL) threads the bilayer. The Cytoplasmic segment spans residues 62-72 (QPRLLRPLTGS). A helical transmembrane segment spans residues 73-92 (PLFIAFLAFSSYMMLSLSWS). Over 93-103 (TPENSTGSLLK) the chain is Periplasmic. Residues 104–122 (RPLYIALLFFCAAILALEA) form a helical membrane-spanning segment. Residues 123–129 (PLRLKTA) are Cytoplasmic-facing. A helical transmembrane segment spans residues 130-150 (TWLAALGAVISAAATLLRYYW). Topologically, residues 151–161 (DANPLRLTGYG) are periplasmic. The chain crosses the membrane as a helical span at residues 162-183 (ALYNPLLSAHVYGAFTALWLAY). Residues 184-189 (WMQSRP) are Cytoplasmic-facing. The helical transmembrane segment at 190–208 (ILAPLPLISLALLGGLLIA) threads the bilayer. The Periplasmic segment spans residues 209 to 212 (TGSR). Residues 213-229 (TPLVGLTAALMWLVLAG) form a helical membrane-spanning segment. The Cytoplasmic portion of the chain corresponds to 230–234 (DRKKA). Residues 235-252 (LIALALALAGALLGYILY) traverse the membrane as a helical segment. Residues 253-306 (PEVITQRGASFRPEIWADALRQISEHPWLGHGYDHPMRIVLSNGMLLADPHNIE) are Periplasmic-facing. Residues 258–319 (QRGASFRPEI…LFAGGIIGLL (62 aa)) form a WZY-C region. Residues 307–331 (LGVLFAGGIIGLLLWVAIYALAFGF) form a helical membrane-spanning segment. At 332–339 (SWKNRKSP) the chain is on the cytoplasmic side. A helical membrane pass occupies residues 340–357 (AVLLASTWLVFGLAAGLT). The Periplasmic portion of the chain corresponds to 358 to 368 (EGNAFLPRPKE). Residues 369-385 (HWFLIWIPMALLYALWI) traverse the membrane as a helical segment. Over 386-401 (QQRFAASRRGEDIAAP) the chain is Cytoplasmic.

Belongs to the O-antigen ligase family. In terms of assembly, homodimer.

The protein localises to the cell inner membrane. It carries out the reaction a lipid-linked O antigen + a lipid A-core oligosaccharide = a lipopolysaccharide + a polyisoprenyl diphosphate.. It participates in bacterial outer membrane biogenesis; lipopolysaccharide biosynthesis. Activity does not require ATP and magnesium ions. In terms of biological role, transferase involved in the biosynthesis of the lipopolysaccharide (LPS). Catalyzes the transfer of a polymerized O-antigen molecule from its polyprenyl diphosphate membrane anchor to a terminal sugar of the lipid A-core oligosaccharide, finalizing the biosynthesis of the lipopolysaccharide. Required for the attachment of both A-band and B-band O-antigens, two forms of O-antigen produced by P.aeruginosa, onto the lipid A-core receptors. Important for cell wall integrity and motility of the bacteria. This chain is O-antigen ligase, found in Pseudomonas aeruginosa (strain ATCC 15692 / DSM 22644 / CIP 104116 / JCM 14847 / LMG 12228 / 1C / PRS 101 / PAO1).